The primary structure comprises 267 residues: MAPSKWDDEEDSSPPPPPPVVARRKFDDEEEEDVLDSWDAAEDSEVEREKAAKAAAAAAKAEAEAAAKKKSKAQRIEERKQERKKLAEANESDEDSEEDEAARRARLRRTEKEGDLKHAQDLFEDIDLNRNRGTPKAIVISDSADPTQAVDLSAMPLFKPTTKDQFTRLTSTLIPLLTAHSKKPHYALWAQEFTKQLVKELNSGDVKKIASALTTISNEKMREERAADKGNKKTKAAKTKVSLVASRDNKIDATPYDDDGLDDDDFM.

Disordered regions lie at residues 1–118 and 221–241; these read MAPS…DLKH and MREE…KTKV. Residues 28-46 show a composition bias toward acidic residues; that stretch reads DEEEEDVLDSWDAAEDSEV. The stretch at 44–99 forms a coiled coil; the sequence is SEVEREKAAKAAAAAAKAEAEAAAKKKSKAQRIEERKQERKKLAEANESDEDSEED. A compositionally biased stretch (basic and acidic residues) spans 74 to 88; sequence QRIEERKQERKKLAE. Residues 90–100 are compositionally biased toward acidic residues; it reads NESDEDSEEDE. Composition is skewed to basic and acidic residues over residues 108 to 118 and 221 to 231; these read RRTEKEGDLKH and MREERAADKGN.

It belongs to the eIF-3 subunit J family. Component of the eukaryotic translation initiation factor 3 (eIF-3) complex.

The protein localises to the cytoplasm. Functionally, component of the eukaryotic translation initiation factor 3 (eIF-3) complex, which is involved in protein synthesis of a specialized repertoire of mRNAs and, together with other initiation factors, stimulates binding of mRNA and methionyl-tRNAi to the 40S ribosome. The eIF-3 complex specifically targets and initiates translation of a subset of mRNAs involved in cell proliferation. This is Eukaryotic translation initiation factor 3 subunit J (hcr1) from Aspergillus fumigatus (strain CBS 144.89 / FGSC A1163 / CEA10) (Neosartorya fumigata).